A 1161-amino-acid chain; its full sequence is Integrin alpha-D (1161 aa).

Positions 1-17 are cleaved as a signal peptide; it reads MTFGTVLLLSVLASYHG. Residues 18 to 1099 lie on the Extracellular side of the membrane; sequence FNLDVEEPTI…MVLEEDEVYN (1082 aa). FG-GAP repeat units follow at residues 19–76 and 77–136; these read NLDV…MCQP and IPLH…IIQT. Asn-59 is a glycosylation site (N-linked (GlcNAc...) asparagine). Cys-67 and Cys-74 form a disulfide bridge. N-linked (GlcNAc...) asparagine glycans are attached at residues Asn-87 and Asn-99. A disulfide bridge connects residues Cys-106 and Cys-124. Residues 150-332 enclose the VWFA domain; that stretch reads DIVFLIDGSG…SIQKQLQEKI (183 aa). FG-GAP repeat units lie at residues 339–390, 391–442, 443–503, 506–564, and 569–629; these read QSRA…PTFI, NMSQ…SRQW, RKKA…RVQW, DAVL…SGIS, and QRIA…FSPV. A glycan (N-linked (GlcNAc...) asparagine) is linked at Asn-391. Asp-465, Asp-467, Asp-469, Asp-473, Asp-529, Asn-531, Asp-533, Asp-537, Asp-592, Asp-596, and Asp-600 together coordinate Ca(2+). Cysteines 654 and 709 form a disulfide. N-linked (GlcNAc...) asparagine glycans are attached at residues Asn-690 and Asn-732. 2 disulfide bridges follow: Cys-768-Cys-774 and Cys-845-Cys-860. N-linked (GlcNAc...) asparagine glycans are attached at residues Asn-872 and Asn-956. 2 cysteine pairs are disulfide-bonded: Cys-993–Cys-1017 and Cys-1022–Cys-1027. N-linked (GlcNAc...) asparagine glycosylation occurs at Asn-1045. A helical transmembrane segment spans residues 1100 to 1120; it reads AIPIIMGSSVGALLLLALITA. Residues 1121–1161 lie on the Cytoplasmic side of the membrane; it reads TLYKLGFFKRHYKEMLEDKPEDTATFSGDDFSCVAPNVPLS. The short motif at 1126–1130 is the GFFKR motif element; that stretch reads GFFKR.

This sequence belongs to the integrin alpha chain family. Heterodimer of an alpha and a beta subunit. Alpha-D associates with beta-2. Expressed moderately on myelomonocytic cell lines and subsets of peripheral blood leukocytes and strongly on tissue-specialized cells, including macrophages foam cells within atherosclerotic plaques, and on splenic red pulp macrophages.

Its subcellular location is the membrane. In terms of biological role, integrin alpha-D/beta-2 is a receptor for ICAM3 and VCAM1. May play a role in the atherosclerotic process such as clearing lipoproteins from plaques and in phagocytosis of blood-borne pathogens, particulate matter, and senescent erythrocytes from the blood. The sequence is that of Integrin alpha-D (ITGAD) from Homo sapiens (Human).